Reading from the N-terminus, the 292-residue chain is Large ribosomal subunit protein uL18 (292 aa).

Belongs to the universal ribosomal protein uL18 family. As to quaternary structure, component of the large ribosomal subunit (LSU).

The protein resides in the cytoplasm. It is found in the nucleus. In terms of biological role, component of the ribosome, a large ribonucleoprotein complex responsible for the synthesis of proteins in the cell. The small ribosomal subunit (SSU) binds messenger RNAs (mRNAs) and translates the encoded message by selecting cognate aminoacyl-transfer RNA (tRNA) molecules. The large subunit (LSU) contains the ribosomal catalytic site termed the peptidyl transferase center (PTC), which catalyzes the formation of peptide bonds, thereby polymerizing the amino acids delivered by tRNAs into a polypeptide chain. The nascent polypeptides leave the ribosome through a tunnel in the LSU and interact with protein factors that function in enzymatic processing, targeting, and the membrane insertion of nascent chains at the exit of the ribosomal tunnel. The protein is Large ribosomal subunit protein uL18 (rpl5) of Dictyostelium discoideum (Social amoeba).